A 639-amino-acid polypeptide reads, in one-letter code: E3 ubiquitin-protein ligase RNF12 (639 aa).

Disordered regions lie at residues Met-1–Arg-28, Arg-67–Arg-403, and Asn-467–Thr-534. Residues Ser-11–Ser-21 show a composition bias toward low complexity. 2 stretches are compositionally biased toward polar residues: residues Ser-110–Ser-138 and Ile-147–Glu-166. Over residues Arg-213–Arg-228 the composition is skewed to basic and acidic residues. Positions His-244–Ser-253 are enriched in polar residues. Over residues Ser-269 to Arg-286 the composition is skewed to low complexity. Residues His-290–Gly-302 show a composition bias toward polar residues. Composition is skewed to low complexity over residues Gln-303–Thr-327 and Ser-335–Ser-348. Over residues Asn-349–Arg-358 the composition is skewed to polar residues. The segment covering Arg-372–Ile-382 has biased composition (basic and acidic residues). A compositionally biased stretch (polar residues) spans Ala-383–Tyr-399. Composition is skewed to pro residues over residues Asn-473–Ala-482 and Pro-493–Val-506. The RING-type; atypical zinc-finger motif lies at Cys-585–Arg-626. A PDZ-binding motif is present at residues Glu-636–Val-639.

The protein belongs to the RNF12 family. In terms of assembly, forms homodimers through the C-terminal region. The N-terminus interacts with the homeobox of LIM/homeobox factor lhx1/lim1, with lhx3/lim3 and lhx5/lim5, and with the N-terminus of ldb1.

The protein localises to the nucleus. It carries out the reaction S-ubiquitinyl-[E2 ubiquitin-conjugating enzyme]-L-cysteine + [acceptor protein]-L-lysine = [E2 ubiquitin-conjugating enzyme]-L-cysteine + N(6)-ubiquitinyl-[acceptor protein]-L-lysine.. Its pathway is protein modification; protein ubiquitination. Functionally, acts as an E3 ubiquitin-protein ligase specific for ldb1, mediating ubiquitination and proteasome-dependent degradation of excess ldb1 in a RING-dependent manner. Does not degrade ldb1 bound to lhx1/lim1, nor lim1 itself and thus contributes to the establishment of proper ldb1-lhx1/lim1 stoichiometry and the formation of a ldb1-lhx1/lim1 complex. Interferes with Spemann organizer function and suppresses secondary axis formation induced by ldb1 and lhx1/lim1. This Xenopus tropicalis (Western clawed frog) protein is E3 ubiquitin-protein ligase RNF12.